Consider the following 224-residue polypeptide: Lipoprotein-releasing system ATP-binding protein LolD (224 aa).

Residues leucine 6–isoleucine 224 enclose the ABC transporter domain. Position 43–50 (glycine 43–threonine 50) interacts with ATP.

It belongs to the ABC transporter superfamily. Lipoprotein translocase (TC 3.A.1.125) family. As to quaternary structure, the complex is composed of two ATP-binding proteins (LolD) and two transmembrane proteins (LolC and LolE).

The protein localises to the cell inner membrane. Functionally, part of the ABC transporter complex LolCDE involved in the translocation of mature outer membrane-directed lipoproteins, from the inner membrane to the periplasmic chaperone, LolA. Responsible for the formation of the LolA-lipoprotein complex in an ATP-dependent manner. This Neorickettsia sennetsu (strain ATCC VR-367 / Miyayama) (Ehrlichia sennetsu) protein is Lipoprotein-releasing system ATP-binding protein LolD.